Reading from the N-terminus, the 185-residue chain is Ribosome-recycling factor (185 aa).

The protein belongs to the RRF family.

It is found in the cytoplasm. Its function is as follows. Responsible for the release of ribosomes from messenger RNA at the termination of protein biosynthesis. May increase the efficiency of translation by recycling ribosomes from one round of translation to another. The protein is Ribosome-recycling factor of Dichelobacter nodosus (strain VCS1703A).